The primary structure comprises 169 residues: Probable phospholipid hydroperoxide glutathione peroxidase (169 aa).

Cys-43 is a catalytic residue.

Belongs to the glutathione peroxidase family.

The protein localises to the cytoplasm. It catalyses the reaction a hydroperoxy polyunsaturated fatty acid + 2 glutathione = a hydroxy polyunsaturated fatty acid + glutathione disulfide + H2O. Functionally, protects cells and enzymes from oxidative damage, by catalyzing the reduction of hydrogen peroxide, lipid peroxides and organic hydroperoxide, by glutathione. The sequence is that of Probable phospholipid hydroperoxide glutathione peroxidase from Nicotiana tabacum (Common tobacco).